Consider the following 347-residue polypeptide: Protein RecA (347 aa).

An ATP-binding site is contributed by 65-72 (GPESSGKT). Residues 327-336 (KFEPTELSRE) show a composition bias toward basic and acidic residues. Residues 327-347 (KFEPTELSREEGDEDTLEDAM) form a disordered region. Acidic residues predominate over residues 337 to 347 (EGDEDTLEDAM).

Belongs to the RecA family.

It is found in the cytoplasm. Its function is as follows. Can catalyze the hydrolysis of ATP in the presence of single-stranded DNA, the ATP-dependent uptake of single-stranded DNA by duplex DNA, and the ATP-dependent hybridization of homologous single-stranded DNAs. It interacts with LexA causing its activation and leading to its autocatalytic cleavage. This Xylella fastidiosa (strain M12) protein is Protein RecA.